The chain runs to 495 residues: ATP synthase subunit beta, chloroplastic (495 aa).

Residue 172–179 (GGAGVGKT) participates in ATP binding.

Belongs to the ATPase alpha/beta chains family. In terms of assembly, F-type ATPases have 2 components, CF(1) - the catalytic core - and CF(0) - the membrane proton channel. CF(1) has five subunits: alpha(3), beta(3), gamma(1), delta(1), epsilon(1). CF(0) has four main subunits: a(1), b(1), b'(1) and c(9-12).

It is found in the plastid. It localises to the chloroplast thylakoid membrane. It carries out the reaction ATP + H2O + 4 H(+)(in) = ADP + phosphate + 5 H(+)(out). Its function is as follows. Produces ATP from ADP in the presence of a proton gradient across the membrane. The catalytic sites are hosted primarily by the beta subunits. This chain is ATP synthase subunit beta, chloroplastic, found in Scilla siberica (Siberian squill).